The primary structure comprises 829 residues: Periplasmic nitrate reductase (829 aa).

The segment at residues 1–27 (MNRRDFMKANAVIAAASAAGLALPAGA) is a signal peptide (tat-type signal). The 4Fe-4S Mo/W bis-MGD-type domain maps to 39–95 (LEWNKAPCRFCGTGCSVMVATREGKVVATHGDANSEVNRGLSCIKGYFLSKIMYGRD). Positions 46, 49, 53, and 81 each coordinate [4Fe-4S] cluster. Mo-bis(molybdopterin guanine dinucleotide) contacts are provided by residues lysine 83, glutamine 150, asparagine 175, cysteine 179, 212–219 (WGSNMAEM), 243–247 (STFEH), 262–264 (QTD), methionine 373, glutamine 377, asparagine 483, 509–510 (SD), lysine 532, aspartate 559, and 719–728 (TGRVLEHWHS). Position 795 (tryptophan 795) interacts with substrate. Asparagine 803 and lysine 820 together coordinate Mo-bis(molybdopterin guanine dinucleotide).

The protein belongs to the prokaryotic molybdopterin-containing oxidoreductase family. NasA/NapA/NarB subfamily. In terms of assembly, component of the periplasmic nitrate reductase NapAB complex composed of NapA and NapB. The cofactor is [4Fe-4S] cluster. Requires Mo-bis(molybdopterin guanine dinucleotide) as cofactor. Post-translationally, predicted to be exported by the Tat system. The position of the signal peptide cleavage has not been experimentally proven.

It localises to the periplasm. The catalysed reaction is 2 Fe(II)-[cytochrome] + nitrate + 2 H(+) = 2 Fe(III)-[cytochrome] + nitrite + H2O. Functionally, catalytic subunit of the periplasmic nitrate reductase complex NapAB. Receives electrons from NapB and catalyzes the reduction of nitrate to nitrite. The sequence is that of Periplasmic nitrate reductase from Shewanella denitrificans (strain OS217 / ATCC BAA-1090 / DSM 15013).